The sequence spans 505 residues: Alpha-internexin (505 aa).

The segment at 1–87 is head; sequence MSFGSEHYLC…SQAAARTNEY (87 aa). A Phosphoserine modification is found at Ser-72. Residues 88-129 are coil 1A; that stretch reads KIIRTNEKEQLQGLNDRFAVFIEKVHQLETQNRALEAELAAL. The 314-residue stretch at 94–407 folds into the IF rod domain; it reads EKEQLQGLND…KLLEGEETRF (314 aa). A linker 1 region spans residues 130-142; that stretch reads RQRHAEPSRVGEL. The tract at residues 143–238 is coil 1B; the sequence is FQRELRELRA…QVHDEEVAEL (96 aa). Ser-219 bears the Phosphoserine mark. Residues 239 to 262 form a linker 2 region; the sequence is LATLQASSQAAAEVDVAVAKPDLT. Positions 263-408 are coil 2; that stretch reads SALREIRAQY…LLEGEETRFS (146 aa). Lys-290 carries the post-translational modification N6-acetyllysine. Ser-335, Ser-474, and Ser-502 each carry phosphoserine. A tail region spans residues 409–505; sequence TSGLSISGLN…EITTSSSQKM (97 aa). Positions 438 to 505 are disordered; sequence KVSSAGLSLK…EITTSSSQKM (68 aa). A compositionally biased stretch (low complexity) spans 495–505; it reads EEITTSSSQKM.

The protein belongs to the intermediate filament family. Forms homodimers (in vitro). Forms heterodimers with NEFL, NEFM or NEFH (in vitro). In terms of processing, O-glycosylated. As to expression, expressed in the dorsal root ganglion neurons (at protein level).

In terms of biological role, class-IV neuronal intermediate filament that is able to self-assemble. It is involved in the morphogenesis of neurons. It may form an independent structural network without the involvement of other neurofilaments or it may cooperate with NEFL to form the filamentous backbone to which NEFM and NEFH attach to form the cross-bridges. May also cooperate with the neuronal intermediate filament protein PRPH to form filamentous networks. This Rattus norvegicus (Rat) protein is Alpha-internexin (Ina).